Reading from the N-terminus, the 111-residue chain is UPF0122 protein YofM (111 aa).

This sequence belongs to the UPF0122 family.

Functionally, might take part in the signal recognition particle (SRP) pathway. This is inferred from the conservation of its genetic proximity to ftsY/ffh. May be a regulatory protein. This is UPF0122 protein YofM (yofM) from Lactococcus lactis subsp. lactis (strain IL1403) (Streptococcus lactis).